We begin with the raw amino-acid sequence, 511 residues long: Steroid 17-alpha-hydroxylase/17,20 lyase (511 aa).

Cysteine 442 is a binding site for heme.

Belongs to the cytochrome P450 family. It depends on heme as a cofactor.

It localises to the endoplasmic reticulum membrane. The protein localises to the microsome membrane. It catalyses the reaction a C21-steroid + reduced [NADPH--hemoprotein reductase] + O2 = a 17alpha-hydroxy-C21-steroid + oxidized [NADPH--hemoprotein reductase] + H2O + H(+). The enzyme catalyses progesterone + reduced [NADPH--hemoprotein reductase] + O2 = 17alpha-hydroxyprogesterone + oxidized [NADPH--hemoprotein reductase] + H2O + H(+). It carries out the reaction pregnenolone + reduced [NADPH--hemoprotein reductase] + O2 = 17alpha-hydroxypregnenolone + oxidized [NADPH--hemoprotein reductase] + H2O + H(+). The catalysed reaction is 17alpha-hydroxyprogesterone + reduced [NADPH--hemoprotein reductase] + O2 = androst-4-ene-3,17-dione + acetate + oxidized [NADPH--hemoprotein reductase] + H2O + 2 H(+). It catalyses the reaction 17alpha-hydroxyprogesterone + reduced [NADPH--hemoprotein reductase] + O2 = 16alpha,17alpha-dihydroxyprogesterone + oxidized [NADPH--hemoprotein reductase] + H2O + H(+). The enzyme catalyses 16alpha,17alpha-dihydroxyprogesterone + reduced [NADPH--hemoprotein reductase] + O2 = 6beta,16alpha,17alpha-trihydroxyprogesterone + oxidized [NADPH--hemoprotein reductase] + H2O + H(+). It carries out the reaction 17alpha-hydroxypregnenolone + reduced [NADPH--hemoprotein reductase] + O2 = 3beta-hydroxyandrost-5-en-17-one + acetate + oxidized [NADPH--hemoprotein reductase] + H2O + 2 H(+). The catalysed reaction is 16alpha,17alpha-dihydroxypregnenolone + reduced [NADPH--hemoprotein reductase] + O2 = 3beta,16alpha-dihydroxy-androst-5-en-17-one + acetate + oxidized [NADPH--hemoprotein reductase] + H2O + 2 H(+). It catalyses the reaction 3beta-hydroxyandrost-5-en-17-one + reduced [NADPH--hemoprotein reductase] + O2 = 3beta,16alpha-dihydroxy-androst-5-en-17-one + oxidized [NADPH--hemoprotein reductase] + H2O + H(+). The enzyme catalyses androst-4-ene-3,17-dione + reduced [NADPH--hemoprotein reductase] + O2 = 16alpha-hydroxyandrost-4-ene-3,17-dione + oxidized [NADPH--hemoprotein reductase] + H2O + H(+). It participates in steroid hormone biosynthesis. The protein operates within steroid biosynthesis; glucocorticoid biosynthesis. With respect to regulation, regulated predominantly by intracellular cAMP levels. The 17,20-lyase activity is stimulated by cytochrome b5, which acts as an allosteric effector increasing the Vmax of the lyase activity. In terms of biological role, a cytochrome P450 monooxygenase involved in corticoid and androgen biosynthesis. Catalyzes 17-alpha hydroxylation of C21 steroids, which is common for both pathways. A second oxidative step, required only for androgen synthesis, involves an acyl-carbon cleavage. The 17-alpha hydroxy intermediates, as part of adrenal glucocorticoids biosynthesis pathway, are precursors of cortisol. Hydroxylates steroid hormones, pregnenolone and progesterone to form 17-alpha hydroxy metabolites, followed by the cleavage of the C17-C20 bond to form C19 steroids, dehydroepiandrosterone (DHEA) and androstenedione. Has 16-alpha hydroxylase activity. Catalyzes 16-alpha hydroxylation of 17-alpha hydroxy pregnenolone, followed by the cleavage of the C17-C20 bond to form 16-alpha-hydroxy DHEA. Also 16-alpha hydroxylates androgens, relevant for estriol synthesis. Mechanistically, uses molecular oxygen inserting one oxygen atom into a substrate, and reducing the second into a water molecule, with two electrons provided by NADPH via cytochrome P450 reductase (CPR; NADPH-ferrihemoprotein reductase). This chain is Steroid 17-alpha-hydroxylase/17,20 lyase (CYP17A1), found in Mesocricetus auratus (Golden hamster).